Here is a 357-residue protein sequence, read N- to C-terminus: Arginine kinase (357 aa).

A2 bears the N-acetylalanine mark. Residues 9 to 91 (KLEEGFKKLE…FDPIIEDYHK (83 aa)) form the Phosphagen kinase N-terminal domain. Residue 64-68 (GVGVY) participates in L-arginine binding. The region spanning 119–356 (FVISTRVRCG…LELIKIEKEM (238 aa)) is the Phosphagen kinase C-terminal domain. ATP is bound by residues 122–126 (STRVR) and H185. Residue E225 coordinates L-arginine. R229 is an ATP binding site. C271 contacts L-arginine. ATP-binding positions include 280–284 (RASVH) and 309–314 (RGTRGE). E314 is an L-arginine binding site.

It belongs to the ATP:guanido phosphotransferase family.

The enzyme catalyses L-arginine + ATP = N(omega)-phospho-L-arginine + ADP + H(+). The polypeptide is Arginine kinase (Callinectes sapidus (Blue crab)).